A 406-amino-acid chain; its full sequence is MLLTLYACLLWLSTSGLWTSQAKDPDSDLSTRSRHRNLAPNNVDFAFALYKHLVASAPGKDVFLSPVSISTALAMLSLGASGYTREQLLQGLGFNLTETPEAEIHQDFQHLHSLLKGSNITSEMTMGNALFLDRSLELLESFSTGSKHYYGLEALAADFQDWAGASRQINEYIKNKTQGKIVDLFLEQDSSAMLILINYIFFKGTWTHSFPPESTREENFYVNETATVKVPMMFQSRAMKYLNDSLLPCQLVQLEYTGNETAFFILPVKGEMDTVIAGLSRDTIQRWSKSLIPSQVDLYVPKVSISGAYDLGSILGDMGIVDLLSHPTHFSGITQNALPKMSKVVHKAVLQFDEKGMEAAAPTTRGRSLHAAPKPVTVHFNRPFIVMVFDHFTWSSLFLGKIVNLT.

Positions 1–22 (MLLTLYACLLWLSTSGLWTSQA) are cleaved as a signal peptide. Asparagine 95, asparagine 119, and asparagine 223 each carry an N-linked (GlcNAc...) asparagine glycan. Glutamine 253 serves as a coordination point for cortisol. Asparagine 259 is a glycosylation site (N-linked (GlcNAc...) asparagine). Cortisol contacts are provided by glutamine 285 and tryptophan 394.

It belongs to the serpin family.

The protein localises to the secreted. Major transport protein for glucocorticoids and progestins in the blood of almost all vertebrate species. This is Corticosteroid-binding globulin (Serpina6) from Sus scrofa (Pig).